The sequence spans 337 residues: Inositol 2-dehydrogenase (337 aa).

It belongs to the Gfo/Idh/MocA family. In terms of assembly, homotetramer.

The enzyme catalyses myo-inositol + NAD(+) = scyllo-inosose + NADH + H(+). Its function is as follows. Involved in the oxidation of myo-inositol (MI) to 2-keto-myo-inositol (2KMI or 2-inosose). The sequence is that of Inositol 2-dehydrogenase from Arthrobacter sp. (strain FB24).